A 179-amino-acid chain; its full sequence is Replication restart protein DnaT (179 aa).

The tract at residues G156–G179 is disordered.

The protein belongs to the DnaT family. In terms of assembly, homooligomerizes. Interacts with PriB. Component of the replication restart primosome. Primosome assembly occurs via a 'hand-off' mechanism. PriA binds to replication forks, subsequently PriB then DnaT bind; DnaT then displaces ssDNA to generate the helicase loading substrate.

Its function is as follows. Involved in the restart of stalled replication forks, which reloads the replicative helicase on sites other than the origin of replication. Can function in multiple replication restart pathways. Displaces ssDNA from a PriB-ssDNA complex. Probably forms a spiral filament on ssDNA. This is Replication restart protein DnaT from Escherichia coli O17:K52:H18 (strain UMN026 / ExPEC).